A 325-amino-acid chain; its full sequence is Olfactory receptor 10AC1 (325 aa).

Residues 1–26 are Extracellular-facing; it reads MDSPSNATVPCGFLLQGFSEFPHLRP. A glycan (N-linked (GlcNAc...) asparagine) is linked at N6. Residues 27-47 form a helical membrane-spanning segment; the sequence is VLFLLLLGVHLATLGGNLLIL. The Cytoplasmic segment spans residues 48–57; it reads VAVASMPSRQ. A helical transmembrane segment spans residues 58-78; that stretch reads PMLLFLCQLSAIELCYTLVVV. Over 79–101 the chain is Extracellular; that stretch reads PRSLVDLSTPGHRRGSPISFLSC. The helical transmembrane segment at 102 to 122 threads the bilayer; the sequence is AFQMQMFVALGGAECFLLAAM. Topologically, residues 123 to 147 are cytoplasmic; sequence AYDRYVAICHPLRYAAVVTPGLCAR. The chain crosses the membrane as a helical span at residues 148-168; that stretch reads LALACCLRGLAVSVGLTVAIF. Over 169-171 the chain is Extracellular; sequence HLP. The helical transmembrane segment at 172-192 threads the bilayer; that stretch reads FCGSRLLLHFFCDITALLHLA. Residues 193-200 are Cytoplasmic-facing; sequence CTRSYADE. The chain crosses the membrane as a helical span at residues 201–221; that stretch reads LPLLGACLVLLLLPSVLILAS. The Extracellular segment spans residues 222-243; it reads YGAIAAALRRLRCPKGRGKAAS. The helical transmembrane segment at 244–264 threads the bilayer; that stretch reads TCALHLAVTFLHYGCATFMYV. Residues 265-325 are Cytoplasmic-facing; the sequence is RPRASYSPRL…QAPGGDLREL (61 aa).

This sequence belongs to the G-protein coupled receptor 1 family.

The protein resides in the cell membrane. Functionally, odorant receptor. This chain is Olfactory receptor 10AC1 (OR10AC1), found in Homo sapiens (Human).